The chain runs to 841 residues: DNA ligase (841 aa).

NAD(+) contacts are provided by residues 54 to 58, 103 to 104, and Glu-143; these read DAEYD and SL. Lys-145 functions as the N6-AMP-lysine intermediate in the catalytic mechanism. NAD(+)-binding residues include Arg-166, Glu-203, Lys-321, and Lys-345. Cys-471, Cys-474, Cys-489, and Cys-495 together coordinate Zn(2+). The interval 554-575 is disordered; the sequence is KTVAESDQMPSEGSSVGASGKH. Residues 561–570 are compositionally biased toward polar residues; it reads QMPSEGSSVG. In terms of domain architecture, BRCT spans 764-841; it reads GINKAVAGKT…SEAELLTLLG (78 aa).

The protein belongs to the NAD-dependent DNA ligase family. LigA subfamily. Mg(2+) is required as a cofactor. The cofactor is Mn(2+).

It carries out the reaction NAD(+) + (deoxyribonucleotide)n-3'-hydroxyl + 5'-phospho-(deoxyribonucleotide)m = (deoxyribonucleotide)n+m + AMP + beta-nicotinamide D-nucleotide.. In terms of biological role, DNA ligase that catalyzes the formation of phosphodiester linkages between 5'-phosphoryl and 3'-hydroxyl groups in double-stranded DNA using NAD as a coenzyme and as the energy source for the reaction. It is essential for DNA replication and repair of damaged DNA. This Neisseria meningitidis serogroup C (strain 053442) protein is DNA ligase.